The chain runs to 82 residues: NAD(P)H-quinone oxidoreductase subunit O, organellar chromatophore (82 aa).

It belongs to the complex I NdhO subunit family. NDH-1 can be composed of about 15 different subunits; different subcomplexes with different compositions have been identified which probably have different functions.

The protein resides in the plastid. Its subcellular location is the organellar chromatophore thylakoid membrane. The catalysed reaction is a plastoquinone + NADH + (n+1) H(+)(in) = a plastoquinol + NAD(+) + n H(+)(out). The enzyme catalyses a plastoquinone + NADPH + (n+1) H(+)(in) = a plastoquinol + NADP(+) + n H(+)(out). Functionally, NDH-1 shuttles electrons from an unknown electron donor, via FMN and iron-sulfur (Fe-S) centers, to quinones in the respiratory and/or the photosynthetic chain. The immediate electron acceptor for the enzyme in this species is believed to be plastoquinone. Couples the redox reaction to proton translocation, and thus conserves the redox energy in a proton gradient. Cyanobacterial NDH-1 also plays a role in inorganic carbon-concentration. The polypeptide is NAD(P)H-quinone oxidoreductase subunit O, organellar chromatophore (Paulinella chromatophora).